The sequence spans 475 residues: Protein nucleotidyltransferase YdiU (475 aa).

Residues glycine 82, glycine 84, arginine 85, lysine 105, aspartate 117, glycine 118, arginine 168, and arginine 175 each coordinate ATP. Aspartate 240 (proton acceptor) is an active-site residue. Mg(2+) is bound by residues asparagine 241 and aspartate 250. Residue aspartate 250 participates in ATP binding.

This sequence belongs to the SELO family. Requires Mg(2+) as cofactor. Mn(2+) is required as a cofactor.

The enzyme catalyses L-seryl-[protein] + ATP = 3-O-(5'-adenylyl)-L-seryl-[protein] + diphosphate. It catalyses the reaction L-threonyl-[protein] + ATP = 3-O-(5'-adenylyl)-L-threonyl-[protein] + diphosphate. The catalysed reaction is L-tyrosyl-[protein] + ATP = O-(5'-adenylyl)-L-tyrosyl-[protein] + diphosphate. It carries out the reaction L-histidyl-[protein] + UTP = N(tele)-(5'-uridylyl)-L-histidyl-[protein] + diphosphate. The enzyme catalyses L-seryl-[protein] + UTP = O-(5'-uridylyl)-L-seryl-[protein] + diphosphate. It catalyses the reaction L-tyrosyl-[protein] + UTP = O-(5'-uridylyl)-L-tyrosyl-[protein] + diphosphate. Nucleotidyltransferase involved in the post-translational modification of proteins. It can catalyze the addition of adenosine monophosphate (AMP) or uridine monophosphate (UMP) to a protein, resulting in modifications known as AMPylation and UMPylation. This is Protein nucleotidyltransferase YdiU from Aeromonas hydrophila subsp. hydrophila (strain ATCC 7966 / DSM 30187 / BCRC 13018 / CCUG 14551 / JCM 1027 / KCTC 2358 / NCIMB 9240 / NCTC 8049).